Reading from the N-terminus, the 324-residue chain is tRNA uridine(34) hydroxylase (324 aa).

In terms of domain architecture, Rhodanese spans 122–218 (QENRCLILDV…YGQQVGTGKW (97 aa)). Cys-178 (cysteine persulfide intermediate) is an active-site residue.

It belongs to the TrhO family.

It catalyses the reaction uridine(34) in tRNA + AH2 + O2 = 5-hydroxyuridine(34) in tRNA + A + H2O. Functionally, catalyzes oxygen-dependent 5-hydroxyuridine (ho5U) modification at position 34 in tRNAs. In Chlamydia pneumoniae (Chlamydophila pneumoniae), this protein is tRNA uridine(34) hydroxylase.